Here is a 422-residue protein sequence, read N- to C-terminus: Glutamate-1-semialdehyde 2,1-aminomutase (422 aa).

Lys264 is modified (N6-(pyridoxal phosphate)lysine).

Belongs to the class-III pyridoxal-phosphate-dependent aminotransferase family. HemL subfamily. In terms of assembly, homodimer. The cofactor is pyridoxal 5'-phosphate.

It localises to the cytoplasm. The catalysed reaction is (S)-4-amino-5-oxopentanoate = 5-aminolevulinate. Its pathway is porphyrin-containing compound metabolism; protoporphyrin-IX biosynthesis; 5-aminolevulinate from L-glutamyl-tRNA(Glu): step 2/2. This chain is Glutamate-1-semialdehyde 2,1-aminomutase, found in Clostridium tetani (strain Massachusetts / E88).